Here is a 203-residue protein sequence, read N- to C-terminus: Glycerol-3-phosphate acyltransferase (203 aa).

The next 6 membrane-spanning stretches (helical) occupy residues 3-23 (ILLA…VVVS), 51-71 (KAAI…VWLV), 74-94 (FGIG…LGHL), 116-136 (AVHP…AFFF), 140-160 (SLAA…LFGT), and 164-178 (PVAW…LLIW).

The protein belongs to the PlsY family. In terms of assembly, probably interacts with PlsX.

The protein resides in the cell inner membrane. It carries out the reaction an acyl phosphate + sn-glycerol 3-phosphate = a 1-acyl-sn-glycero-3-phosphate + phosphate. It participates in lipid metabolism; phospholipid metabolism. Its function is as follows. Catalyzes the transfer of an acyl group from acyl-phosphate (acyl-PO(4)) to glycerol-3-phosphate (G3P) to form lysophosphatidic acid (LPA). This enzyme utilizes acyl-phosphate as fatty acyl donor, but not acyl-CoA or acyl-ACP. This chain is Glycerol-3-phosphate acyltransferase, found in Burkholderia pseudomallei (strain K96243).